We begin with the raw amino-acid sequence, 319 residues long: tRNA uridine(34) hydroxylase (319 aa).

One can recognise a Rhodanese domain in the interval 127-221 (KQEDTVIIDA…YGKDPEVQGE (95 aa)). Cys181 functions as the Cysteine persulfide intermediate in the catalytic mechanism.

The protein belongs to the TrhO family.

The enzyme catalyses uridine(34) in tRNA + AH2 + O2 = 5-hydroxyuridine(34) in tRNA + A + H2O. Catalyzes oxygen-dependent 5-hydroxyuridine (ho5U) modification at position 34 in tRNAs. In Bacillus cereus (strain B4264), this protein is tRNA uridine(34) hydroxylase.